The chain runs to 450 residues: Probable glycine dehydrogenase (decarboxylating) subunit 1 (450 aa).

It belongs to the GcvP family. N-terminal subunit subfamily. In terms of assembly, the glycine cleavage system is composed of four proteins: P, T, L and H. In this organism, the P 'protein' is a heterodimer of two subunits.

It carries out the reaction N(6)-[(R)-lipoyl]-L-lysyl-[glycine-cleavage complex H protein] + glycine + H(+) = N(6)-[(R)-S(8)-aminomethyldihydrolipoyl]-L-lysyl-[glycine-cleavage complex H protein] + CO2. Functionally, the glycine cleavage system catalyzes the degradation of glycine. The P protein binds the alpha-amino group of glycine through its pyridoxal phosphate cofactor; CO(2) is released and the remaining methylamine moiety is then transferred to the lipoamide cofactor of the H protein. In Desulfotalea psychrophila (strain LSv54 / DSM 12343), this protein is Probable glycine dehydrogenase (decarboxylating) subunit 1.